The following is a 244-amino-acid chain: MTSILVSRFKISALTLQYATSDSVNFCRIPCRGCDEKFLQCWLVASFHCGKGGPQFQKAKRVFLVRYTGGGIIVLRDSWGYRPFPMKGNVGARCVPEGLKSSPHTRGFRCLAASLECYSAKSFLGPLLCSPQKRGPMQKHNIRGDTLGKSPPCGPKGNFKGLPLVIFDGVPGVGGGLWPGKLGGKTPLFFSSNCFSGKESNPPVYKTGNLCGEKSPKKEETFKNFFFFPDPFNPNEQNFSSFLN.

The first 23 residues, 1–23, serve as a signal peptide directing secretion; that stretch reads MTSILVSRFKISALTLQYATSDS. In terms of domain architecture, SCP spans 67 to 194; the sequence is YTGGGIIVLR…KTPLFFSSNC (128 aa). The Cell attachment site motif lies at 143–145; that stretch reads RGD.

The protein belongs to the CRISP family. As to expression, expressed in salivary glands.

Its subcellular location is the secreted. Functionally, inhibits platelet aggregation induced by all agonists tested (ADP, arachidonic acid, the thromboxane A2 analog U46619, thrombin, and snake venom snaclecs (TMVA that activates platelet through GPIB, and stejnulxin that specifically acts through GPVI (GP6))). May act by competing with fibrinogen for binding to glycoprotein IIb/IIIa (ITGA2B/ITGB3). In Tabanus yao (Horsefly), this protein is Tabinhibitin 8.